The following is a 318-amino-acid chain: C1GALT1-specific chaperone 1 (318 aa).

Residues M1 to S6 are Cytoplasmic-facing. A helical; Signal-anchor for type II membrane protein membrane pass occupies residues S7–G26. Residues H27–D318 are Lumenal-facing.

It belongs to the glycosyltransferase 31 family. Beta3-Gal-T subfamily. In terms of assembly, associates with core 1 beta-3-galactosyltransferase (C1GALT1), probably not with the soluble active form.

It localises to the membrane. Its function is as follows. Probable chaperone required for the generation of 1 O-glycan Gal-beta1-3GalNAc-alpha1-Ser/Thr (T antigen), which is a precursor for many extended O-glycans in glycoproteins. Probably acts as a specific molecular chaperone assisting the folding/stability of core 1 beta-3-galactosyltransferase (C1GALT1). The chain is C1GALT1-specific chaperone 1 (C1GALT1C1) from Bos taurus (Bovine).